Here is a 61-residue protein sequence, read N- to C-terminus: Small ribosomal subunit protein uS14 (61 aa).

4 residues coordinate Zn(2+): cysteine 24, cysteine 27, cysteine 40, and cysteine 43.

Belongs to the universal ribosomal protein uS14 family. Zinc-binding uS14 subfamily. Part of the 30S ribosomal subunit. Contacts proteins S3 and S10. The cofactor is Zn(2+).

In terms of biological role, binds 16S rRNA, required for the assembly of 30S particles and may also be responsible for determining the conformation of the 16S rRNA at the A site. In Caldanaerobacter subterraneus subsp. tengcongensis (strain DSM 15242 / JCM 11007 / NBRC 100824 / MB4) (Thermoanaerobacter tengcongensis), this protein is Small ribosomal subunit protein uS14.